The sequence spans 121 residues: Large ribosomal subunit protein bL12 (121 aa).

It belongs to the bacterial ribosomal protein bL12 family. In terms of assembly, homodimer. Part of the ribosomal stalk of the 50S ribosomal subunit. Forms a multimeric L10(L12)X complex, where L10 forms an elongated spine to which 2 to 4 L12 dimers bind in a sequential fashion. Binds GTP-bound translation factors.

In terms of biological role, forms part of the ribosomal stalk which helps the ribosome interact with GTP-bound translation factors. Is thus essential for accurate translation. The protein is Large ribosomal subunit protein bL12 of Clostridium perfringens (strain 13 / Type A).